Here is a 1456-residue protein sequence, read N- to C-terminus: MRLLLLLAFISVIPVSVQLLDARQFLIYNEDHKRCVDALSAISVQTATCNPEAESQKFRWVSDSQIMSVAFKLCLGVPSKTDWASVTLYACDSKSEYQKWECKNDTLFGIKGTELYFNYGNRQEKNIKLYKGSGLWSRWKVYGTTDDLCSRGYEAMYSLLGNANGAVCAFPFKFENKWYADCTSAGRSDGWLWCGTTTDYDKDKLFGFCPLHFEGSERLWNKDPLTGILYQINSKSALTWHQARASCKQQNADLLSVTEIHEQMYLTGLTSSLSSGLWIGLNSLSVRSGWQWAGGSPFRYLNWLPGSPSSEPGKSCVSLNPGKNAKWENLECVQKLGYICKKGNNTLNPFIIPSASDVPTGCPNQWWPYAGHCYRIHREEKKIQKYALQACRKEGGDLASIHSIEEFDFIFSQLGYEPNDELWIGLNDIKIQMYFEWSDGTPVTFTKWLPGEPSHENNRQEDCVVMKGKDGYWADRACEQPLGYICKMVSQSHAVVPEGADKGCRKGWKRHGFYCYLIGSTLSTFTDANHTCTNEKAYLTTVEDRYEQAFLTSLVGLRPEKYFWTGLSDVQNKGTFRWTVDEQVQFTHWNADMPGRKAGCVAMKTGVAGGLWDVLSCEEKAKFVCKHWAEGVTRPPEPTTTPEPKCPENWGTTSKTSMCFKLYAKGKHEKKTWFESRDFCKAIGGELASIKSKDEQQVIWRLITSSGSYHELFWLGLTYGSPSEGFTWSDGSPVSYENWAYGEPNNYQNVEYCGELKGDPGMSWNDINCEHLNNWICQIQKGKTLLPEPTPAPQDNPPVTADGWVIYKDYQYYFSKEKETMDNARAFCKKNFGDLATIKSESEKKFLWKYINKNGGQSPYFIGMLISMDKKFIWMDGSKVDFVAWATGEPNFANDDENCVTMYTNSGFWNDINCGYPNNFICQRHNSSINATAMPTTPTTPGGCKEGWHLYKNKCFKIFGFANEEKKSWQDARQACKGLKGNLVSIENAQEQAFVTYHMRDSTFNAWTGLNDINAEHMFLWTAGQGVHYTNWGKGYPGGRRSSLSYEDADCVVVIGGNSREAGTWMDDTCDSKQGYICQTQTDPSLPVSPTTTPKDGFVTYGKSSYSLMKLKLPWHEAETYCKDHTSLLASILDPYSNAFAWMKMHPFNVPIWIALNSNLTNNEYTWTDRWRVRYTNWGADEPKLKSACVYMDVDGYWRTSYCNESFYFLCKKSDEIPATEPPQLPGKCPESEQTAWIPFYGHCYYFESSFTRSWGQASLECLRMGASLVSIETAAESSFLSYRVEPLKSKTNFWIGMFRNVEGKWLWLNDNPVSFVNWKTGDPSGERNDCVVLASSSGLWNNIHCSSYKGFICKMPKIIDPVTTHSSITTKADQRKMDPQPKGSSKAAGVVTVVLLIVIGAGVAAYFFYKKRHALHIPQEATFENTLYFNSNLSPGTSDTKDLMGNIEQNEHAII.

The first 19 residues, 1-19, serve as a signal peptide directing secretion; it reads MRLLLLLAFISVIPVSVQL. The Extracellular segment spans residues 20 to 1388; the sequence is LDARQFLIYN…DPQPKGSSKA (1369 aa). The Ricin B-type lectin domain occupies 22 to 142; it reads ARQFLIYNED…SGLWSRWKVY (121 aa). Cystine bridges form between C35–C49, C74–C91, C102–C149, C168–C194, C182–C209, C247–C340, and C316–C332. The N-linked (GlcNAc...) asparagine glycan is linked to N104. A Fibronectin type-II domain is found at 163–211; the sequence is ANGAVCAFPFKFENKWYADCTSAGRSDGWLWCGTTTDYDKDKLFGFCPL. The C-type lectin 1 domain occupies 225 to 341; the sequence is LTGILYQINS…CVQKLGYICK (117 aa). N344 is a glycosylation site (N-linked (GlcNAc...) asparagine). C-type lectin domains lie at 369–487, 511–626, 655–778, and 807–923; these read YAGH…YICK, HGFY…FVCK, KTSM…WICQ, and YKDY…FICQ. 2 cysteine pairs are disulfide-bonded: C391–C486 and C463–C478. N-linked (GlcNAc...) asparagine glycosylation is present at N529. 6 cysteine pairs are disulfide-bonded: C532–C625, C600–C617, C680–C777, C753–C769, C828–C922, and C899–C914. N-linked (GlcNAc...) asparagine glycans are attached at residues N926 and N930. 3 consecutive C-type lectin domains span residues 951 to 1079, 1101 to 1212, and 1240 to 1355; these read YKNK…YICQ, YGKS…FLCK, and FYGH…FICK. Disulfide bonds link C976–C1078, C1051–C1070, C1122–C1211, C1189–C1203, C1262–C1354, and C1331–C1346. A glycan (N-linked (GlcNAc...) asparagine) is linked at N1159. N1204 carries N-linked (GlcNAc...) asparagine glycosylation. A helical membrane pass occupies residues 1389-1409; it reads AGVVTVVLLIVIGAGVAAYFF. Over 1410-1456 the chain is Cytoplasmic; that stretch reads YKKRHALHIPQEATFENTLYFNSNLSPGTSDTKDLMGNIEQNEHAII.

As to expression, detected in macrophages.

The protein localises to the endosome membrane. It localises to the cell membrane. Functionally, mediates the endocytosis of glycoproteins by macrophages. Binds both sulfated and non-sulfated polysaccharide chains. Acts as phagocytic receptor for bacteria, fungi and other pathogens. In Mus musculus (Mouse), this protein is Macrophage mannose receptor 1 (Mrc1).